We begin with the raw amino-acid sequence, 258 residues long: Sugar fermentation stimulation protein homolog (258 aa).

Belongs to the SfsA family.

This Prochlorococcus marinus (strain NATL2A) protein is Sugar fermentation stimulation protein homolog.